The sequence spans 2430 residues: Transcription factor HIVEP2 (2430 aa).

The interval 1 to 127 (MDTGDTALGQ…SLEGPPWLFP (127 aa)) is disordered. Polar residues-rich tracts occupy residues 11–22 (KATSRSGETDSV) and 96–110 (HSLSFPQHSLSQGMT). 2 C2H2-type zinc fingers span residues 189–211 (YICPYCSRACAKPSVLKKHIRSH) and 217–239 (YPCIPCGFSFKTKSNLYKHRKSH). Disordered stretches follow at residues 271 to 302 (IHSDGEQSTDTDEESSLFAEASDKVSPGPPVP), 374 to 418 (SEKK…NTNA), and 744 to 995 (AHGH…SGKH). Positions 381 to 418 (SEPSLNLLSPHSKGSTDSGYFSRSESAEQQISPPNTNA) are enriched in polar residues. 2 stretches are compositionally biased toward basic and acidic residues: residues 744–753 (AHGHSDRLDP) and 775–784 (DPDKMTDLGK). Positions 792–804 (SVIQHTNSLSRPN) are enriched in polar residues. Ser-811 carries the post-translational modification Phosphoserine. The span at 853 to 863 (SKPTPSQQVPQ) shows a compositional bias: polar residues. Over residues 884-908 (RVTEEPDKPEKEKEAPTKEPEKPVE) the composition is skewed to basic and acidic residues. The Nuclear localization signal motif lies at 929 to 935 (PKKKRLR). Ser-942, Ser-947, Ser-1040, Ser-1431, and Ser-1435 each carry phosphoserine. Residues 944–974 (GESSFESTGTGLSRSPSQESNLSHSSSFSMS) are compositionally biased toward low complexity. The disordered stretch occupies residues 1472–1584 (KKGLSRPQKP…GGQQEEEGKA (113 aa)). 2 stretches are compositionally biased toward low complexity: residues 1499–1520 (SRSSSFSSLSPSSSQDHPSASG) and 1560–1569 (SDMSMSPQSS). 2 C2H2-type zinc fingers span residues 1783 to 1805 (YICEECGIRCKKPSMLKKHIRTH) and 1811 to 1835 (YVCKLCNFAFKTKGNLTKHMKSKAH). Disordered stretches follow at residues 1848–1931 (SVDD…SSLP) and 1986–2117 (FQSK…SPRR). Residues 1850 to 1860 (DDTETEEAENM) show a composition bias toward acidic residues. Basic and acidic residues predominate over residues 1861-1871 (EELHKTSEKHS). The segment covering 1883-1909 (DAEESDGEDGDDNDDDDEDDDDFDDQG) has biased composition (acidic residues). Over residues 1991–2001 (TDSEPDKDRLD) the composition is skewed to basic and acidic residues. Low complexity predominate over residues 2013 to 2037 (SSEPSSSPRDFSPSSYRSSPGYDSS). Tandem repeats lie at residues 2037–2040 (SPCR), 2043–2046 (SPKR), 2055–2058 (SPRR), 2067–2070 (SPMR), 2073–2076 (SPRK), 2090–2093 (SPRR), 2096–2099 (SPRR), 2102–2105 (SPGK), 2114–2117 (SPRR), and 2129–2132 (SPRR). The segment at 2037-2132 (SPCRDNSPKR…TTIRAPSPRR (96 aa)) is 10 X 4 AA tandem repeats of S-P-[RGMKC]-[RK]. A compositionally biased stretch (basic and acidic residues) spans 2062–2085 (PRRDLSPMRHLSPRKEAALRREMS). Ser-2102 is modified (phosphoserine). Residues 2107–2116 (ITARRDLSPR) show a composition bias toward basic and acidic residues. Disordered stretches follow at residues 2226–2252 (PALSGLHPPPTLPLPTEGSEEKKGAPG), 2268–2309 (KQAP…QEEN), and 2352–2430 (SIRH…NQLH). The segment covering 2271–2289 (PQVLQSSGLPSSPSSPRLL) has biased composition (low complexity). Ser-2281 and Ser-2285 each carry phosphoserine. Residues 2291–2301 (KQSTSEDSLNS) show a composition bias toward polar residues. Basic and acidic residues predominate over residues 2371–2380 (PDLHDGEKDT). The segment covering 2406 to 2417 (FQSSKELSLSTE) has biased composition (polar residues). Ser-2413 and Ser-2415 each carry phosphoserine.

As to quaternary structure, interacts with TCF4. In terms of tissue distribution, expressed in heart, lung, skeletal muscle and liver. In the brain expressed in cerebral cortex, hippocampus, corpora amygdala and cerebellar cortex.

It is found in the nucleus. Specifically binds to the DNA sequence 5'-GGGACTTTCC-3' which is found in the enhancer elements of numerous viral promoters such as those of SV40, CMV, or HIV1. In addition, related sequences are found in the enhancer elements of a number of cellular promoters, including those of the class I MHC, interleukin-2 receptor, somatostatin receptor II, and interferon-beta genes. It may act in T-cell activation. This is Transcription factor HIVEP2 (Hivep2) from Mus musculus (Mouse).